Here is a 562-residue protein sequence, read N- to C-terminus: NAD-dependent malic enzyme 1 (562 aa).

Tyrosine 101 functions as the Proton donor in the catalytic mechanism. Arginine 154 provides a ligand contact to NAD(+). Lysine 172 functions as the Proton acceptor in the catalytic mechanism. A divalent metal cation is bound by residues glutamate 243, aspartate 244, and aspartate 267. The NAD(+) site is built by aspartate 267 and asparagine 415.

This sequence belongs to the malic enzymes family. As to quaternary structure, homotetramer. Requires Mg(2+) as cofactor. Mn(2+) serves as cofactor.

It carries out the reaction (S)-malate + NAD(+) = pyruvate + CO2 + NADH. The catalysed reaction is oxaloacetate + H(+) = pyruvate + CO2. The polypeptide is NAD-dependent malic enzyme 1 (Vibrio vulnificus (strain YJ016)).